Here is a 433-residue protein sequence, read N- to C-terminus: MAYPNGKLSEEKVFKDPVHRYVHVRDKLIWDLIGTREFQRLRRIKQLGTTYLTFHGAEHSRFNHSLGVYEIVRRMVDDVFKGRPEWDDSERELCLAAALLHDLGHGPFSHSFEKVFHLDHEDFTRGIILGDTEVNQVLRKVSPGFPQDVAEVIAKTYKNKQVVSLISSQIDADRMDYLQRDAYYTGVSYGHFDMERILRVMRPREDQIVIKESGMHAVEDYIMSRYQMYWQVYFHPVTRSAEVILTKILHRAKQLHDEGYVFTHAPVHFYSIFEGKLTLEDYVKLDESIILYYFQAWEDEEDAILSDLCRRFINRQLFQYVEFNPNEEMSAYFELTSLFKEAGIDPSYYLVVDSSSDLPYDFYRPGEEEERLPIHLLTQNGQIKELSRQSAIVESISGKRRTDHKLYYPKDLICDGTKHPEAKMKIRQLLGLT.

The region spanning 61–178 (RFNHSLGVYE…QIDADRMDYL (118 aa)) is the HD domain.

This is an uncharacterized protein from Bacillus subtilis (strain 168).